The following is a 442-amino-acid chain: Histidine--tRNA ligase (442 aa).

Belongs to the class-II aminoacyl-tRNA synthetase family. As to quaternary structure, homodimer.

The protein resides in the cytoplasm. It catalyses the reaction tRNA(His) + L-histidine + ATP = L-histidyl-tRNA(His) + AMP + diphosphate + H(+). The protein is Histidine--tRNA ligase of Helicobacter acinonychis (strain Sheeba).